Consider the following 474-residue polypeptide: tRNA-2-methylthio-N(6)-dimethylallyladenosine synthase (474 aa).

Positions Lys-3–Ala-120 constitute an MTTase N-terminal domain. [4Fe-4S] cluster contacts are provided by Cys-12, Cys-49, Cys-83, Cys-157, Cys-161, and Cys-164. Residues Arg-143 to Arg-375 enclose the Radical SAM core domain. Residues Arg-378 to Arg-441 enclose the TRAM domain.

The protein belongs to the methylthiotransferase family. MiaB subfamily. As to quaternary structure, monomer. [4Fe-4S] cluster serves as cofactor.

It localises to the cytoplasm. It carries out the reaction N(6)-dimethylallyladenosine(37) in tRNA + (sulfur carrier)-SH + AH2 + 2 S-adenosyl-L-methionine = 2-methylsulfanyl-N(6)-dimethylallyladenosine(37) in tRNA + (sulfur carrier)-H + 5'-deoxyadenosine + L-methionine + A + S-adenosyl-L-homocysteine + 2 H(+). Catalyzes the methylthiolation of N6-(dimethylallyl)adenosine (i(6)A), leading to the formation of 2-methylthio-N6-(dimethylallyl)adenosine (ms(2)i(6)A) at position 37 in tRNAs that read codons beginning with uridine. This Shewanella woodyi (strain ATCC 51908 / MS32) protein is tRNA-2-methylthio-N(6)-dimethylallyladenosine synthase.